Here is a 247-residue protein sequence, read N- to C-terminus: MSKLFWAMLSFITRLPVPRRWSQGLDFEHYSRGIITFPLIGLLLGAISGLVFMVLQAWCGVPLAALFSVLVLALMTGGFHLDGLADTCDGVFSARSRDCMLEIMRDSRLGTHGGLALIFVVLAKILVLSELALRGEPSLASLAAACAVSRGTAALLMYRHRYAREEGLGNVFIGKIDGRQTCVTLGLAAIFAAVLLPGMHGVAAMVVTMVAIFILGQLLKRTLGGQTGDTLGAAIELGELVFLLALL.

Transmembrane regions (helical) follow at residues 34–54 (IITFPLIGLLLGAISGLVFMV), 59–79 (CGVPLAALFSVLVLALMTGGF), 113–133 (GGLALIFVVLAKILVLSELAL), and 194–214 (VLLPGMHGVAAMVVTMVAIFI).

The protein belongs to the CobS family. Mg(2+) is required as a cofactor.

The protein resides in the cell inner membrane. It catalyses the reaction alpha-ribazole + adenosylcob(III)inamide-GDP = adenosylcob(III)alamin + GMP + H(+). It carries out the reaction alpha-ribazole 5'-phosphate + adenosylcob(III)inamide-GDP = adenosylcob(III)alamin 5'-phosphate + GMP + H(+). It functions in the pathway cofactor biosynthesis; adenosylcobalamin biosynthesis; adenosylcobalamin from cob(II)yrinate a,c-diamide: step 7/7. Functionally, joins adenosylcobinamide-GDP and alpha-ribazole to generate adenosylcobalamin (Ado-cobalamin). Also synthesizes adenosylcobalamin 5'-phosphate from adenosylcobinamide-GDP and alpha-ribazole 5'-phosphate. This chain is Adenosylcobinamide-GDP ribazoletransferase, found in Escherichia coli (strain ATCC 8739 / DSM 1576 / NBRC 3972 / NCIMB 8545 / WDCM 00012 / Crooks).